A 113-amino-acid polypeptide reads, in one-letter code: Nucleoid-associated protein FMG_0513 (113 aa).

A disordered region spans residues 1–44 (MGNKFRGGMPGMGNMGNMMKQMQKMQRQMEETQKRLEETEVTAT). Positions 15–26 (MGNMMKQMQKMQ) are enriched in low complexity. A compositionally biased stretch (basic and acidic residues) spans 27-38 (RQMEETQKRLEE).

It belongs to the YbaB/EbfC family. In terms of assembly, homodimer.

It localises to the cytoplasm. It is found in the nucleoid. Binds to DNA and alters its conformation. May be involved in regulation of gene expression, nucleoid organization and DNA protection. The protein is Nucleoid-associated protein FMG_0513 of Finegoldia magna (strain ATCC 29328 / DSM 20472 / WAL 2508) (Peptostreptococcus magnus).